A 223-amino-acid polypeptide reads, in one-letter code: MSLYATQDEKKQAAAKAALKHLPKGGILGVGTGSTVNFLIDLLPELQLEAAVASSQATADRLKKLGIEVVDMNHVGSLDAYVDGADEIDRHMHMIKGGGAALTREKIVASIAKKFVCIVDDSKWVDQLGRDFPLPVEVIPMARSAVARKLVSLGGDPVYREGVVTDNGNIILDVFNLNILNAIDLEKTINNIPGVVTNGIFALNPATIAIVATNDGIEERTAQ.

Substrate is bound by residues 32-35 (TGST), 83-86 (DGAD), and 96-99 (KGGG). Residue glutamate 105 is the Proton acceptor of the active site. A substrate-binding site is contributed by lysine 123.

It belongs to the ribose 5-phosphate isomerase family. As to quaternary structure, homodimer.

It carries out the reaction aldehydo-D-ribose 5-phosphate = D-ribulose 5-phosphate. It functions in the pathway carbohydrate degradation; pentose phosphate pathway; D-ribose 5-phosphate from D-ribulose 5-phosphate (non-oxidative stage): step 1/1. Its function is as follows. Catalyzes the reversible conversion of ribose-5-phosphate to ribulose 5-phosphate. The protein is Ribose-5-phosphate isomerase A of Acinetobacter baumannii (strain ATCC 17978 / DSM 105126 / CIP 53.77 / LMG 1025 / NCDC KC755 / 5377).